The chain runs to 230 residues: UPF0502 protein Patl_1161 (230 aa).

Belongs to the UPF0502 family.

In Pseudoalteromonas atlantica (strain T6c / ATCC BAA-1087), this protein is UPF0502 protein Patl_1161.